The following is a 59-amino-acid chain: uncharacterized protein (59 aa).

This is an uncharacterized protein from Dictyostelium discoideum (Social amoeba).